A 160-amino-acid chain; its full sequence is Deoxyuridine 5'-triphosphate nucleotidohydrolase (160 aa).

Residues 79-81, N92, 96-98, and K106 contribute to the substrate site; these read RSG and TVD.

This sequence belongs to the dUTPase family. Mg(2+) is required as a cofactor.

It catalyses the reaction dUTP + H2O = dUMP + diphosphate + H(+). Its pathway is pyrimidine metabolism; dUMP biosynthesis; dUMP from dCTP (dUTP route): step 2/2. In terms of biological role, this enzyme is involved in nucleotide metabolism: it produces dUMP, the immediate precursor of thymidine nucleotides and it decreases the intracellular concentration of dUTP so that uracil cannot be incorporated into DNA. The sequence is that of Deoxyuridine 5'-triphosphate nucleotidohydrolase from Sinorhizobium medicae (strain WSM419) (Ensifer medicae).